Reading from the N-terminus, the 153-residue chain is Holo-[acyl-carrier-protein] synthase (153 aa).

Residues Asp24 and Glu78 each coordinate Mg(2+).

It belongs to the P-Pant transferase superfamily. AcpS family. Mg(2+) serves as cofactor.

It localises to the cytoplasm. It catalyses the reaction apo-[ACP] + CoA = holo-[ACP] + adenosine 3',5'-bisphosphate + H(+). In terms of biological role, transfers the 4'-phosphopantetheine moiety from coenzyme A to a Ser of acyl-carrier-protein. This chain is Holo-[acyl-carrier-protein] synthase, found in Bordetella parapertussis (strain 12822 / ATCC BAA-587 / NCTC 13253).